A 341-amino-acid chain; its full sequence is Protein-glutamate methylesterase/protein-glutamine glutaminase 1 (341 aa).

In terms of domain architecture, Response regulatory spans 2-119 (KVGIVNDSAL…SDAKLTAGPL (118 aa)). A 4-aspartylphosphate modification is found at Asp53. The CheB-type methylesterase domain occupies 146 to 331 (TLAASRLVAI…LTAIAPRLVQ (186 aa)). Catalysis depends on residues Ser158, His185, and Asp278.

The protein belongs to the CheB family. Post-translationally, phosphorylated by CheA. Phosphorylation of the N-terminal regulatory domain activates the methylesterase activity.

It localises to the cytoplasm. The enzyme catalyses [protein]-L-glutamate 5-O-methyl ester + H2O = L-glutamyl-[protein] + methanol + H(+). It catalyses the reaction L-glutaminyl-[protein] + H2O = L-glutamyl-[protein] + NH4(+). Its function is as follows. Involved in chemotaxis. Part of a chemotaxis signal transduction system that modulates chemotaxis in response to various stimuli. Catalyzes the demethylation of specific methylglutamate residues introduced into the chemoreceptors (methyl-accepting chemotaxis proteins or MCP) by CheR. Also mediates the irreversible deamidation of specific glutamine residues to glutamic acid. This is Protein-glutamate methylesterase/protein-glutamine glutaminase 1 from Cupriavidus pinatubonensis (strain JMP 134 / LMG 1197) (Cupriavidus necator (strain JMP 134)).